A 432-amino-acid polypeptide reads, in one-letter code: Serine hydroxymethyltransferase (432 aa).

(6S)-5,6,7,8-tetrahydrofolate contacts are provided by residues Leu127 and 131-133 (GHL). Lys236 bears the N6-(pyridoxal phosphate)lysine mark.

The protein belongs to the SHMT family. Homodimer. Pyridoxal 5'-phosphate serves as cofactor.

It is found in the cytoplasm. It carries out the reaction (6R)-5,10-methylene-5,6,7,8-tetrahydrofolate + glycine + H2O = (6S)-5,6,7,8-tetrahydrofolate + L-serine. It participates in one-carbon metabolism; tetrahydrofolate interconversion. The protein operates within amino-acid biosynthesis; glycine biosynthesis; glycine from L-serine: step 1/1. In terms of biological role, catalyzes the reversible interconversion of serine and glycine with tetrahydrofolate (THF) serving as the one-carbon carrier. This reaction serves as the major source of one-carbon groups required for the biosynthesis of purines, thymidylate, methionine, and other important biomolecules. Also exhibits THF-independent aldolase activity toward beta-hydroxyamino acids, producing glycine and aldehydes, via a retro-aldol mechanism. This is Serine hydroxymethyltransferase from Rhizobium rhizogenes (strain K84 / ATCC BAA-868) (Agrobacterium radiobacter).